Reading from the N-terminus, the 169-residue chain is Allophycocyanin subunit beta-18 (169 aa).

Asn-72 carries the post-translational modification N4-methylasparagine. Cys-82 lines the (2R,3E)-phycocyanobilin pocket.

This sequence belongs to the phycobiliprotein family. As to quaternary structure, heterodimer of ApcE and this beta chain. Contains one covalently linked bilin chromophore.

It localises to the cellular thylakoid membrane. In terms of biological role, a variant beta-allophycocyanin (AP) which forms a complex with ApcE, a phycobilisome terminal emitter that influences energy transfer to photosystem II. The polypeptide is Allophycocyanin subunit beta-18 (apcF) (Synechocystis sp. (strain ATCC 27184 / PCC 6803 / Kazusa)).